A 402-amino-acid chain; its full sequence is 4-hydroxy-3-methylbut-2-enyl diphosphate reductase (402 aa).

Residue Cys66 participates in [4Fe-4S] cluster binding. His96 is a binding site for (2E)-4-hydroxy-3-methylbut-2-enyl diphosphate. His96 provides a ligand contact to dimethylallyl diphosphate. Residue His96 participates in isopentenyl diphosphate binding. Residue Cys157 coordinates [4Fe-4S] cluster. His185 is a binding site for (2E)-4-hydroxy-3-methylbut-2-enyl diphosphate. A dimethylallyl diphosphate-binding site is contributed by His185. An isopentenyl diphosphate-binding site is contributed by His185. The Proton donor role is filled by Glu187. Thr250 serves as a coordination point for (2E)-4-hydroxy-3-methylbut-2-enyl diphosphate. Cys288 contributes to the [4Fe-4S] cluster binding site. Ser317, Ser318, Asn319, and Ser379 together coordinate (2E)-4-hydroxy-3-methylbut-2-enyl diphosphate. Positions 317, 318, 319, and 379 each coordinate dimethylallyl diphosphate. Residues Ser317, Ser318, Asn319, and Ser379 each contribute to the isopentenyl diphosphate site.

It belongs to the IspH family. The cofactor is [4Fe-4S] cluster.

It catalyses the reaction isopentenyl diphosphate + 2 oxidized [2Fe-2S]-[ferredoxin] + H2O = (2E)-4-hydroxy-3-methylbut-2-enyl diphosphate + 2 reduced [2Fe-2S]-[ferredoxin] + 2 H(+). The catalysed reaction is dimethylallyl diphosphate + 2 oxidized [2Fe-2S]-[ferredoxin] + H2O = (2E)-4-hydroxy-3-methylbut-2-enyl diphosphate + 2 reduced [2Fe-2S]-[ferredoxin] + 2 H(+). Its pathway is isoprenoid biosynthesis; dimethylallyl diphosphate biosynthesis; dimethylallyl diphosphate from (2E)-4-hydroxy-3-methylbutenyl diphosphate: step 1/1. It functions in the pathway isoprenoid biosynthesis; isopentenyl diphosphate biosynthesis via DXP pathway; isopentenyl diphosphate from 1-deoxy-D-xylulose 5-phosphate: step 6/6. Catalyzes the conversion of 1-hydroxy-2-methyl-2-(E)-butenyl 4-diphosphate (HMBPP) into a mixture of isopentenyl diphosphate (IPP) and dimethylallyl diphosphate (DMAPP). Acts in the terminal step of the DOXP/MEP pathway for isoprenoid precursor biosynthesis. The protein is 4-hydroxy-3-methylbut-2-enyl diphosphate reductase of Nostoc sp. (strain PCC 7120 / SAG 25.82 / UTEX 2576).